The sequence spans 336 residues: Aromatic prenyltransferase (336 aa).

It belongs to the aromatic prenyltransferase family.

Its function is as follows. Prenyltransferase that attaches isoprenoid moieties to carbon atoms of aromatic substrates in an enzyme-catalyzed Friedel-Crafts reaction. Shows specificity for dimethylallyl diphosphate (DMAPP) and does not accept geranyl diphosphate (GPP) or isopentenyl diphosphate (IPP). Prenylates the artificial substrate 2,7-dihydroxynaphthalene (2,7-DHN), as well as dihydrophenazine-1-carboxylic acid at a lower level. Only traces of products are detected with aspulvinone E, flaviolin, or 4-hydroxybenzoic acid as substrates; and no product is formed with L-tryptophan, L-tyrosine, or 4-hydroxyphenylpyruvate. Ptf seems no to be involved in the prenylation reaction in the biosynthesis of aspulvinone H and J and the physiological function of ptf remains unknown. This is Aromatic prenyltransferase from Aspergillus terreus (strain NIH 2624 / FGSC A1156).